An 82-amino-acid chain; its full sequence is ATP synthase subunit c (82 aa).

2 helical membrane-spanning segments follow: residues 5–25 (IASA…IGPG) and 57–77 (LAFM…LLFA).

Belongs to the ATPase C chain family. F-type ATPases have 2 components, F(1) - the catalytic core - and F(0) - the membrane proton channel. F(1) has five subunits: alpha(3), beta(3), gamma(1), delta(1), epsilon(1). F(0) has four main subunits: a(1), b(1), b'(1) and c(10-14). The alpha and beta chains form an alternating ring which encloses part of the gamma chain. F(1) is attached to F(0) by a central stalk formed by the gamma and epsilon chains, while a peripheral stalk is formed by the delta, b and b' chains.

It is found in the cellular thylakoid membrane. F(1)F(0) ATP synthase produces ATP from ADP in the presence of a proton or sodium gradient. F-type ATPases consist of two structural domains, F(1) containing the extramembraneous catalytic core and F(0) containing the membrane proton channel, linked together by a central stalk and a peripheral stalk. During catalysis, ATP synthesis in the catalytic domain of F(1) is coupled via a rotary mechanism of the central stalk subunits to proton translocation. Functionally, key component of the F(0) channel; it plays a direct role in translocation across the membrane. A homomeric c-ring of between 10-14 subunits forms the central stalk rotor element with the F(1) delta and epsilon subunits. The chain is ATP synthase subunit c from Cyanothece sp. (strain PCC 7425 / ATCC 29141).